Consider the following 731-residue polypeptide: Ribonuclease R (731 aa).

The RNB domain maps to Arg260–Phe589. One can recognise an S1 motif domain in the interval Gly647–Tyr728.

Belongs to the RNR ribonuclease family. RNase R subfamily. In terms of assembly, monomer.

The protein resides in the cytoplasm. It carries out the reaction Exonucleolytic cleavage in the 3'- to 5'-direction to yield nucleoside 5'-phosphates.. Its function is as follows. 3'-5' exoribonuclease that releases 5'-nucleoside monophosphates and is involved in maturation of structured RNAs. This Buchnera aphidicola subsp. Acyrthosiphon pisum (strain APS) (Acyrthosiphon pisum symbiotic bacterium) protein is Ribonuclease R.